We begin with the raw amino-acid sequence, 150 residues long: Large ribosomal subunit protein bL9 (150 aa).

It belongs to the bacterial ribosomal protein bL9 family.

Its function is as follows. Binds to the 23S rRNA. The sequence is that of Large ribosomal subunit protein bL9 from Paraburkholderia xenovorans (strain LB400).